Reading from the N-terminus, the 207-residue chain is Segregation and condensation protein B (207 aa).

Belongs to the ScpB family. As to quaternary structure, homodimer. Homodimerization may be required to stabilize the binding of ScpA to the Smc head domains. Component of a cohesin-like complex composed of ScpA, ScpB and the Smc homodimer, in which ScpA and ScpB bind to the head domain of Smc. The presence of the three proteins is required for the association of the complex with DNA.

The protein localises to the cytoplasm. Participates in chromosomal partition during cell division. May act via the formation of a condensin-like complex containing Smc and ScpA that pull DNA away from mid-cell into both cell halves. This is Segregation and condensation protein B from Mycoplasmopsis pulmonis (strain UAB CTIP) (Mycoplasma pulmonis).